The chain runs to 478 residues: Protein nucleotidyltransferase YdiU (478 aa).

ATP-binding residues include Gly-84, Gly-86, Arg-87, Lys-107, Asp-119, Gly-120, Arg-170, and Arg-177. Asp-246 acts as the Proton acceptor in catalysis. Residues Asn-247 and Asp-256 each contribute to the Mg(2+) site. Asp-256 is an ATP binding site.

It belongs to the SELO family. Requires Mg(2+) as cofactor. Mn(2+) is required as a cofactor.

It carries out the reaction L-seryl-[protein] + ATP = 3-O-(5'-adenylyl)-L-seryl-[protein] + diphosphate. It catalyses the reaction L-threonyl-[protein] + ATP = 3-O-(5'-adenylyl)-L-threonyl-[protein] + diphosphate. The enzyme catalyses L-tyrosyl-[protein] + ATP = O-(5'-adenylyl)-L-tyrosyl-[protein] + diphosphate. The catalysed reaction is L-histidyl-[protein] + UTP = N(tele)-(5'-uridylyl)-L-histidyl-[protein] + diphosphate. It carries out the reaction L-seryl-[protein] + UTP = O-(5'-uridylyl)-L-seryl-[protein] + diphosphate. It catalyses the reaction L-tyrosyl-[protein] + UTP = O-(5'-uridylyl)-L-tyrosyl-[protein] + diphosphate. Its function is as follows. Nucleotidyltransferase involved in the post-translational modification of proteins. It can catalyze the addition of adenosine monophosphate (AMP) or uridine monophosphate (UMP) to a protein, resulting in modifications known as AMPylation and UMPylation. The chain is Protein nucleotidyltransferase YdiU from Escherichia coli O157:H7.